A 554-amino-acid polypeptide reads, in one-letter code: Peroxisomal membrane protein PEX29 (554 aa).

At 1–145 (MDSVTNFFWN…PFMIMDELIK (145 aa)) the chain is on the cytoplasmic side. Composition is skewed to polar residues over residues 11–22 (DTYNAGTPTRST) and 43–53 (ISSGSRTSDPT). Residues 11-73 (DTYNAGTPTR…PTSGGGFPST (63 aa)) are disordered. Positions 55-64 (GSLPSSSGQP) are enriched in low complexity. Residues 146–166 (ILNWTNPAYTVSIMFLYTLII) traverse the membrane as a helical segment. The Peroxisomal portion of the chain corresponds to 167-172 (LKPFQM). Residues 173–193 (LSSLPIFYLLFCVMVPQYLYI) form a helical membrane-spanning segment. At 194–264 (HKPNPTSYLD…LQKFAFFTNE (71 aa)) the chain is on the cytoplasmic side. The chain crosses the membrane as a helical span at residues 265-285 (AISSFYFIVLLIIATLNFLYM). Residues 286–287 (DK) are Peroxisomal-facing. The chain crosses the membrane as a helical span at residues 288–308 (FIKLIPMRPVLILLGWGFFIA). The Cytoplasmic segment spans residues 309-554 (SHPSNREYLL…ELTDTLNSTI (246 aa)). The segment at 500–532 (GVTKGSMSGGLTHSSDDDRADEESINGTIPNLN) is disordered.

This sequence belongs to the PEX28-32 family. PEX29 subfamily.

Its subcellular location is the peroxisome membrane. Involved in the regulation of peroxisome number, size and distribution. The protein is Peroxisomal membrane protein PEX29 (PEX29) of Saccharomyces cerevisiae (strain ATCC 204508 / S288c) (Baker's yeast).